A 501-amino-acid chain; its full sequence is Geissoschizine oxidase (501 aa).

Residues 1 to 21 (MEFSFSSPLLYILYFLLFFIV) traverse the membrane as a helical segment. Cys442 provides a ligand contact to heme.

The protein belongs to the cytochrome P450 family. Heme serves as cofactor.

It is found in the membrane. The enzyme catalyses (19E)-geissoschizine + reduced [NADPH--hemoprotein reductase] + O2 = akuammicine + formate + oxidized [NADPH--hemoprotein reductase] + H2O + H(+). The protein operates within alkaloid biosynthesis. Functionally, a cytochrome P450 monooxygenase involved in the biosynthesis of strychnos monoterpene indole alkaloids (MIAs) natural products, compounds with effects on glucose absorption. Catalyzes the conversion of geissoschizine to akuammicine. The chain is Geissoschizine oxidase from Alstonia scholaris (Dogbane).